Here is a 295-residue protein sequence, read N- to C-terminus: MPYQQITINVNDAVAERLADALMEHGALSAAIEDAYAGTQNEQAIFGEPGMPAEQIWQQSKVIALFGEHDEAAAIIQIAAQECGLKDLAYTGETIEDQDWVRLTQSQFDPIRISDRLWITPSWHEAPEGTAVNLRLDPGLAFGTGSHPTTRLCLKWLDTQLKNGESVLDYGCGSGILTIAALKLGAGSAVGVDIDEQAVRAGKDNAEQNNVDAQFFLPDGLPQGQFDVVVANILANPLRMLGEMLAARTKQGGRIVLSGLLDEQAEELGGIYSQWFDLDPAETEEGWARLSGTKR.

Residues T150, G171, D193, and N232 each contribute to the S-adenosyl-L-methionine site.

This sequence belongs to the methyltransferase superfamily. PrmA family.

Its subcellular location is the cytoplasm. It catalyses the reaction L-lysyl-[protein] + 3 S-adenosyl-L-methionine = N(6),N(6),N(6)-trimethyl-L-lysyl-[protein] + 3 S-adenosyl-L-homocysteine + 3 H(+). Methylates ribosomal protein L11. This chain is Ribosomal protein L11 methyltransferase, found in Neisseria meningitidis serogroup C / serotype 2a (strain ATCC 700532 / DSM 15464 / FAM18).